The sequence spans 321 residues: Coiled-coil domain-containing protein 42-like 1 (321 aa).

2 coiled-coil regions span residues 36–144 (IRRL…EKCH) and 202–229 (IVQFSNEIHRLYIRLEKAKKKRREWELR).

The protein belongs to the CFAP73 family.

In Xenopus laevis (African clawed frog), this protein is Coiled-coil domain-containing protein 42-like 1.